A 307-amino-acid chain; its full sequence is Cyclin-dependent kinase 5 activator 1 (307 aa).

At Ser-8 the chain carries Phosphoserine; by CDK5. Residues 96-136 (STFAQPPPAQPPAPPANQLSGSQTGVSSSVKKAPHPSVTSA) form a disordered region. The segment covering 100-110 (QPPPAQPPAPP) has biased composition (pro residues). The span at 112–125 (NQLSGSQTGVSSSV) shows a compositional bias: polar residues. A Phosphothreonine; by CDK5 modification is found at Thr-138.

It belongs to the cyclin-dependent kinase 5 activator family. Heterodimer composed of a catalytic subunit CDK5 and a regulatory subunit CDK5R1 (p25) and macromolecular complex composed of at least CDK5, CDK5R1 (p35) and CDK5RAP1 or CDK5RAP2 or CDK5RAP3. Only the heterodimer shows kinase activity. Interacts with EPHA4 and NGEF; may mediate the activation of NGEF by EPHA4. Interacts with RASGRF2. The complex p35/CDK5 interacts with CLOCK. The p35 form is proteolytically cleaved by calpain, giving rise to the p25 form. P35 has a 5 to 10 fold shorter half-life compared to p25. The conversion results in deregulation of the CDK5 kinase: p25/CDK5 kinase displays an increased and altered tau phosphorylation in comparison to the p35/CDK5 kinase in vivo. Post-translationally, myristoylated. A proper myristoylation signal is essential for the proper distribution of p35. In terms of processing, phosphorylation at Ser-8 and Thr-138 by CDK5 prevents calpain-mediated proteolysis. Ubiquitinated, leading to its degradation: degradation of p35 by proteasome results in down-regulation of CDK5 activity. During this process, CDK5 phosphorylates p35 and induces its ubiquitination and subsequent degradation. Ubiquitinated by the CRL2(FEM1B) complex, which recognizes the -Gly-Leu-Asp-Arg C-degron at the C-terminus, leading to its degradation. In terms of tissue distribution, brain and neuron specific.

It is found in the cell membrane. The protein resides in the cell projection. It localises to the neuron projection. The protein localises to the nucleus. Its subcellular location is the cytoplasm. It is found in the perinuclear region. The protein resides in the perikaryon. Its function is as follows. p35 is a neuron specific activator of CDK5. The complex p35/CDK5 is required for neurite outgrowth and cortical lamination. Involved in dendritic spine morphogenesis by mediating the EFNA1-EPHA4 signaling. Activator of TPKII. The complex p35/CDK5 participates in the regulation of the circadian clock by modulating the function of CLOCK protein: phosphorylates CLOCK at 'Thr-451' and 'Thr-461' and regulates the transcriptional activity of the CLOCK-BMAL1 heterodimer in association with altered stability and subcellular distribution. This is Cyclin-dependent kinase 5 activator 1 (CDK5R1) from Spermophilus citellus (European ground squirrel).